We begin with the raw amino-acid sequence, 243 residues long: Outer membrane protein A (243 aa).

Beta stranded transmembrane passes span 1-8, 13-21, 48-57, 62-69, and 88-96; these read LAAKLSYP, LDIYTRLGG, PLAAVGVEYA, WATRLDYQ, and MLSLGVSYR. 5 tandem repeats follow at residues 104–105, 106–107, 108–109, 110–111, and 112–113. The segment at 104 to 113 is 5 X 2 AA tandem repeats of A-P; that stretch reads APAPAPAPAP. Residues 115–243 form the OmpA-like domain; the sequence is VETKLFTLKS…RRVEIEVKGI (129 aa). The cysteines at positions 215 and 229 are disulfide-linked.

Belongs to the outer membrane OOP (TC 1.B.6) superfamily. OmpA family. Monomer and homodimer.

It localises to the cell outer membrane. Functionally, with TolR probably plays a role in maintaining the position of the peptidoglycan cell wall in the periplasm. Acts as a porin with low permeability that allows slow penetration of small solutes; an internal gate slows down solute passage. This is Outer membrane protein A from Serratia odorifera.